The chain runs to 818 residues: RNA-directed RNA polymerase (818 aa).

Residues proline 524–isoleucine 641 enclose the RdRp catalytic domain.

This sequence belongs to the tombusviridae RNA polymerase family.

It catalyses the reaction RNA(n) + a ribonucleoside 5'-triphosphate = RNA(n+1) + diphosphate. RNA-dependent RNA polymerase that plays an essential role in the virus replication. In Tomato bushy stunt virus (strain Cherry) (TBSV), this protein is RNA-directed RNA polymerase.